The sequence spans 330 residues: Beta-ketoacyl-[acyl-carrier-protein] synthase III (330 aa).

Active-site residues include cysteine 118 and histidine 257. The ACP-binding stretch occupies residues 258 to 262 (QANLR). Residue asparagine 287 is part of the active site.

This sequence belongs to the thiolase-like superfamily. FabH family. Homodimer.

It localises to the cytoplasm. The enzyme catalyses malonyl-[ACP] + acetyl-CoA + H(+) = 3-oxobutanoyl-[ACP] + CO2 + CoA. It functions in the pathway lipid metabolism; fatty acid biosynthesis. Its function is as follows. Catalyzes the condensation reaction of fatty acid synthesis by the addition to an acyl acceptor of two carbons from malonyl-ACP. Catalyzes the first condensation reaction which initiates fatty acid synthesis and may therefore play a role in governing the total rate of fatty acid production. Possesses both acetoacetyl-ACP synthase and acetyl transacylase activities. Its substrate specificity determines the biosynthesis of branched-chain and/or straight-chain of fatty acids. The sequence is that of Beta-ketoacyl-[acyl-carrier-protein] synthase III from Nitratidesulfovibrio vulgaris (strain DSM 19637 / Miyazaki F) (Desulfovibrio vulgaris).